The primary structure comprises 68 residues: Protein RH1 (68 aa).

The polypeptide is Protein RH1 (Pantherophis guttatus (Corn snake)).